The following is a 451-amino-acid chain: Inositol-pentakisphosphate 2-kinase (451 aa).

Met1 carries the N-acetylmethionine modification. ATP contacts are provided by residues 19–22 (GGAN) and Arg40. Residues Arg45 and Arg130 each coordinate substrate. Residues 147–149 (NDH) and 166–168 (EIK) each bind ATP. An EXKPK motif motif is present at residues 166–170 (EIKPK). Substrate contacts are provided by Lys170, Lys200, and Asn238. An ATP-binding site is contributed by Arg241. The Zn(2+) site is built by His320, Cys330, Cys333, and His346. Asp368 is a binding site for substrate. Residue Asp407 coordinates ATP. Lys411, Arg415, and Tyr419 together coordinate substrate.

This sequence belongs to the IPK1 type 2 family. The cofactor is Zn(2+). Strongly expressed in leaves and cauline leaves. Weakly expressed in siliques and flowers. In flower, it is expressed in the major organs of developing flower buds. Strongly expressed in sepals, petals, in the male and female organs of immature and mature flower buds. Strongly expressed in the gynoecium and carpels which are fused to form the gynoecium. Also expressed in the transmitting tissue and ovules.

The enzyme catalyses 1D-myo-inositol 1,3,4,5,6-pentakisphosphate + ATP = 1D-myo-inositol hexakisphosphate + ADP + H(+). Functionally, phosphorylates Ins(1,3,4,5,6)P5 at position 2 to form Ins(1,2,3,4,5,6)P6 (InsP6 or phytate). Phytate is a regulator of intracellular signaling, a highly abundant animal antinutrient, and a phosphate store in plant seeds. Also phosphorylates Ins(1,3,4,6)P4 and Ins(1,4,5,6)P4 to produce Ins(1,2,3,4,6)P5 and Ins(1,2,4,5,6)P5. The polypeptide is Inositol-pentakisphosphate 2-kinase (IPK1) (Arabidopsis thaliana (Mouse-ear cress)).